Here is a 276-residue protein sequence, read N- to C-terminus: NH(3)-dependent NAD(+) synthetase (276 aa).

Residue 43–50 (GISGGVDS) participates in ATP binding. Residue Asp49 participates in Mg(2+) binding. Arg146 contacts deamido-NAD(+). ATP is bound at residue Thr166. Glu171 provides a ligand contact to Mg(2+). Deamido-NAD(+)-binding residues include Lys179 and Asp186. Residues Lys195 and Thr217 each coordinate ATP. Deamido-NAD(+) is bound at residue 266–267 (HK).

This sequence belongs to the NAD synthetase family. Homodimer.

The enzyme catalyses deamido-NAD(+) + NH4(+) + ATP = AMP + diphosphate + NAD(+) + H(+). It participates in cofactor biosynthesis; NAD(+) biosynthesis; NAD(+) from deamido-NAD(+) (ammonia route): step 1/1. Functionally, catalyzes the ATP-dependent amidation of deamido-NAD to form NAD. Uses ammonia as a nitrogen source. This is NH(3)-dependent NAD(+) synthetase from Vibrio vulnificus (strain CMCP6).